The sequence spans 283 residues: Protein BASIC PENTACYSTEINE5 (283 aa).

The segment at 51–86 (AVKERNEAVAATKEALASRDEALEQRDKALSERDNA) is alanine-zipper. The stretch at 63–89 (KEALASRDEALEQRDKALSERDNAIME) forms a coiled coil. Positions 122–176 (EESHLPNPSPISTIPPEAANTRPTKRKKESKQGKKMGEDLNRPVASPGKKSRKDW) are disordered. A compositionally biased stretch (basic and acidic residues) spans 151 to 162 (SKQGKKMGEDLN).

It belongs to the BBR/BPC family. As to quaternary structure, homodimer. Heterodimer. As to expression, expressed in seedlings, leaves and pistils.

The protein resides in the nucleus. Functionally, transcriptional regulator that specifically binds to GA-rich elements (GAGA-repeats) present in regulatory sequences of genes involved in developmental processes. This Arabidopsis thaliana (Mouse-ear cress) protein is Protein BASIC PENTACYSTEINE5 (BPC5).